A 313-amino-acid polypeptide reads, in one-letter code: Biotin synthase (313 aa).

The Radical SAM core domain maps to 28–258; the sequence is NFGNDIELCS…LFPQARLRLS (231 aa). [4Fe-4S] cluster contacts are provided by Cys-46, Cys-50, and Cys-53. Residues Cys-90, Cys-121, Cys-181, and Arg-256 each contribute to the [2Fe-2S] cluster site.

It belongs to the radical SAM superfamily. Biotin synthase family. As to quaternary structure, homodimer. It depends on [4Fe-4S] cluster as a cofactor. Requires [2Fe-2S] cluster as cofactor.

The catalysed reaction is (4R,5S)-dethiobiotin + (sulfur carrier)-SH + 2 reduced [2Fe-2S]-[ferredoxin] + 2 S-adenosyl-L-methionine = (sulfur carrier)-H + biotin + 2 5'-deoxyadenosine + 2 L-methionine + 2 oxidized [2Fe-2S]-[ferredoxin]. It functions in the pathway cofactor biosynthesis; biotin biosynthesis; biotin from 7,8-diaminononanoate: step 2/2. Functionally, catalyzes the conversion of dethiobiotin (DTB) to biotin by the insertion of a sulfur atom into dethiobiotin via a radical-based mechanism. This is Biotin synthase from Francisella tularensis subsp. mediasiatica (strain FSC147).